Consider the following 368-residue polypeptide: Cytochrome P450 119 (368 aa).

Heme-binding residues include H76, R80, T257, R259, H315, and C317.

Belongs to the cytochrome P450 family. Heme serves as cofactor.

It localises to the cytoplasm. It catalyses the reaction 2 a phenolic donor + H2O2 = 2 a phenolic radical donor + 2 H2O. In terms of biological role, the endogenous substrate is not known. In vitro, catalyzes the H(2)O(2)-dependent epoxidation of styrene, cis-beta-methylstyrene, and cis-stilbene with retention of stereochemistry. Is able to use cumene hydroperoxide (CHP) or tert-butyl hydroperoxide (TBHP) instead of H(2)O(2) as the electron acceptor. Can also hydroxylate fatty acids such as lauric acid. This is Cytochrome P450 119 (cyp119) from Sulfolobus acidocaldarius (strain ATCC 33909 / DSM 639 / JCM 8929 / NBRC 15157 / NCIMB 11770).